A 630-amino-acid polypeptide reads, in one-letter code: Conserved oligomeric Golgi complex subunit 6 (630 aa).

The protein belongs to the COG6 family. In terms of assembly, component of the conserved oligomeric Golgi complex which is composed of eight different subunits and is required for normal Golgi morphology and localization.

It is found in the golgi apparatus membrane. In terms of biological role, required for normal Golgi function. The chain is Conserved oligomeric Golgi complex subunit 6 from Drosophila melanogaster (Fruit fly).